A 188-amino-acid chain; its full sequence is Probable nicotinate-nucleotide adenylyltransferase (188 aa).

It belongs to the NadD family.

The catalysed reaction is nicotinate beta-D-ribonucleotide + ATP + H(+) = deamido-NAD(+) + diphosphate. It participates in cofactor biosynthesis; NAD(+) biosynthesis; deamido-NAD(+) from nicotinate D-ribonucleotide: step 1/1. Its function is as follows. Catalyzes the reversible adenylation of nicotinate mononucleotide (NaMN) to nicotinic acid adenine dinucleotide (NaAD). The polypeptide is Probable nicotinate-nucleotide adenylyltransferase (Listeria monocytogenes serovar 1/2a (strain ATCC BAA-679 / EGD-e)).